A 287-amino-acid chain; its full sequence is MKYVYLFLPAIGWGLMPLVIASVKNSTVYNQIVGTVAASFIFGAIVMAIMHPAMSWSLFLLSALGGACWVIGQVGQYISYEKIGVSETMPISTGLQLIGVPLVGVLAFGEWSSPQAKLYGFIGILVLIIGVVLTSFTDRGTSEGNKSNQVSTIILLVLTSLGYITSSSIPKALHGNSVSIFFGQTFGMLVAVFIYTLVTKNLHVWKEKSTVQSGGAGILYAIAALAYILSVQDNGVNMAFVISQLCVVISTLGGLIFLHEKKTRKGLIFTIAGLILIIGGAMLTTLF.

The next 10 helical transmembrane spans lie at 4-23, 28-50, 56-78, 91-108, 118-137, 150-169, 179-198, 211-230, 240-259, and 266-285; these read VYLFLPAIGWGLMPLVIASV, VYNQIVGTVAASFIFGAIVMAIM, WSLFLLSALGGACWVIGQVGQYI, ISTGLQLIGVPLVGVLAF, LYGFIGILVLIIGVVLTSFT, VSTIILLVLTSLGYITSSSI, SIFFGQTFGMLVAVFIYTLV, VQSGGAGILYAIAALAYILS, FVISQLCVVISTLGGLIFLH, and GLIFTIAGLILIIGGAMLTT.

The protein belongs to the GRP transporter (TC 2.A.7.5) family.

It is found in the cell membrane. The chain is Putative sugar uptake protein LJ_0170 from Lactobacillus johnsonii (strain CNCM I-12250 / La1 / NCC 533).